A 155-amino-acid polypeptide reads, in one-letter code: Sec-independent protein translocase protein TatB (155 aa).

A helical membrane pass occupies residues 1–21; sequence MFGMGFFEILVVLVVAIIFLG. Residues 109–155 are disordered; that stretch reads SLENNAPPKHLNKEVSNREVFHNEPPKEIELIANNNTTKHDKEKEHV. Basic and acidic residues-rich tracts occupy residues 119 to 138 and 146 to 155; these read LNKEVSNREVFHNEPPKEIE and TKHDKEKEHV.

The protein belongs to the TatB family. As to quaternary structure, the Tat system comprises two distinct complexes: a TatABC complex, containing multiple copies of TatA, TatB and TatC subunits, and a separate TatA complex, containing only TatA subunits. Substrates initially bind to the TatABC complex, which probably triggers association of the separate TatA complex to form the active translocon.

It localises to the cell inner membrane. Part of the twin-arginine translocation (Tat) system that transports large folded proteins containing a characteristic twin-arginine motif in their signal peptide across membranes. Together with TatC, TatB is part of a receptor directly interacting with Tat signal peptides. TatB may form an oligomeric binding site that transiently accommodates folded Tat precursor proteins before their translocation. The sequence is that of Sec-independent protein translocase protein TatB from Helicobacter acinonychis (strain Sheeba).